We begin with the raw amino-acid sequence, 232 residues long: tRNA1(Val) (adenine(37)-N6)-methyltransferase (232 aa).

It belongs to the methyltransferase superfamily. tRNA (adenine-N(6)-)-methyltransferase family.

The protein localises to the cytoplasm. It carries out the reaction adenosine(37) in tRNA1(Val) + S-adenosyl-L-methionine = N(6)-methyladenosine(37) in tRNA1(Val) + S-adenosyl-L-homocysteine + H(+). Its function is as follows. Specifically methylates the adenine in position 37 of tRNA(1)(Val) (anticodon cmo5UAC). This chain is tRNA1(Val) (adenine(37)-N6)-methyltransferase, found in Haemophilus influenzae (strain PittGG).